A 167-amino-acid chain; its full sequence is Phosphopantetheine adenylyltransferase (167 aa).

Residue Ser11 participates in substrate binding. ATP contacts are provided by residues 11–12 (SF) and His19. Positions 43, 76, and 90 each coordinate substrate. Residues 91–93 (GIR), Glu101, and 126–132 (YDALSST) each bind ATP.

It belongs to the bacterial CoaD family. Homohexamer. Mg(2+) is required as a cofactor.

The protein resides in the cytoplasm. The enzyme catalyses (R)-4'-phosphopantetheine + ATP + H(+) = 3'-dephospho-CoA + diphosphate. Its pathway is cofactor biosynthesis; coenzyme A biosynthesis; CoA from (R)-pantothenate: step 4/5. Functionally, reversibly transfers an adenylyl group from ATP to 4'-phosphopantetheine, yielding dephospho-CoA (dPCoA) and pyrophosphate. This is Phosphopantetheine adenylyltransferase from Lacticaseibacillus casei (strain BL23) (Lactobacillus casei).